The following is a 609-amino-acid chain: Invertase (609 aa).

The signal sequence occupies residues 1-14; it reads MLKLLSLMVPLASA. N-linked (GlcNAc...) asparagine glycans are attached at residues Asn-23, Asn-32, and Asn-36. Substrate is bound by residues 56–59, Gln-77, and 119–120; these read WMND and FS. The active site involves Asp-59. 3 N-linked (GlcNAc...) asparagine glycosylation sites follow: Asn-128, Asn-129, and Asn-135. Position 187-188 (187-188) interacts with substrate; it reads RD. Asn-227 and Asn-233 each carry an N-linked (GlcNAc...) asparagine glycan. Glu-245 is a substrate binding site. Asn-257, Asn-267, Asn-277, Asn-284, Asn-291, Asn-298, Asn-303, and Asn-345 each carry an N-linked (GlcNAc...) asparagine glycan. Position 389 (Trp-389) interacts with substrate. N-linked (GlcNAc...) asparagine glycosylation is found at Asn-409, Asn-420, Asn-440, Asn-448, Asn-452, Asn-477, Asn-545, and Asn-566.

This sequence belongs to the glycosyl hydrolase 32 family.

It catalyses the reaction Hydrolysis of terminal non-reducing beta-D-fructofuranoside residues in beta-D-fructofuranosides.. This is Invertase (INV1) from Kluyveromyces lactis (strain ATCC 8585 / CBS 2359 / DSM 70799 / NBRC 1267 / NRRL Y-1140 / WM37) (Yeast).